Here is a 290-residue protein sequence, read N- to C-terminus: Small ribosomal subunit biogenesis GTPase RsgA (290 aa).

In terms of domain architecture, CP-type G spans 61–218; the sequence is SSELLRPAVA…IVDTPGFSTL (158 aa). Residues 110-113 and 161-169 each bind GTP; these read NKVD and GPSGAGKST. Cys-243, Cys-248, His-250, and Cys-256 together coordinate Zn(2+).

Belongs to the TRAFAC class YlqF/YawG GTPase family. RsgA subfamily. As to quaternary structure, monomer. Associates with 30S ribosomal subunit, binds 16S rRNA. Zn(2+) serves as cofactor.

The protein localises to the cytoplasm. Its function is as follows. One of several proteins that assist in the late maturation steps of the functional core of the 30S ribosomal subunit. Helps release RbfA from mature subunits. May play a role in the assembly of ribosomal proteins into the subunit. Circularly permuted GTPase that catalyzes slow GTP hydrolysis, GTPase activity is stimulated by the 30S ribosomal subunit. This Clostridium botulinum (strain Eklund 17B / Type B) protein is Small ribosomal subunit biogenesis GTPase RsgA.